We begin with the raw amino-acid sequence, 1095 residues long: DNA-directed RNA polymerase subunit beta (1095 aa).

Positions 1069–1095 are disordered; the sequence is DLMQDVNPRRSTPSRPTYESLGKEYEE.

This sequence belongs to the RNA polymerase beta chain family. In terms of assembly, in cyanobacteria the RNAP catalytic core is composed of 2 alpha, 1 beta, 1 beta', 1 gamma and 1 omega subunit. When a sigma factor is associated with the core the holoenzyme is formed, which can initiate transcription.

The enzyme catalyses RNA(n) + a ribonucleoside 5'-triphosphate = RNA(n+1) + diphosphate. Its function is as follows. DNA-dependent RNA polymerase catalyzes the transcription of DNA into RNA using the four ribonucleoside triphosphates as substrates. The protein is DNA-directed RNA polymerase subunit beta of Prochlorococcus marinus (strain NATL2A).